A 460-amino-acid polypeptide reads, in one-letter code: MALSAAIVLAAGEGTRMRSNKPKVLHTFAGKTFLNRVMDSVAALNPDTLAVVVHFQAERVAEAARSYDEQVTIVNQDDIPGTGRAVQCAMAQLTESGKIDGPVLIAASDMPLLDSETLHRLVEFHTASGNGATVLTTILDDPTGYGRIIRDREGNVLRIVEQKDANRSELAVQEVNTSVYVFEASVLAEAIAGLKSNNAQGEFYLTDALETAKSAGKVGAFAAPDPLTVEGVNDRVQLAALSKTYNRRVCERWMRNGVTILDPETTWIEDDVRIGRDATILPGSFLQGHTVIGEDAVVGPYTTLIDATVDEGAVVERSRVQESHIGARTNIGPWTYLRVGNEFGEDAKAGAFVEMKKTHIGNGTKVPHLSYVGDARLGDHTNIGGGTITANYDGVHKNRTVIGDGCHVGAGNLFVAPVEVGDNVTTGAGSVVRHAVPDDTMVYSENTQHNVEGWKPAWER.

Positions 1 to 235 are pyrophosphorylase; the sequence is MALSAAIVLA…PLTVEGVNDR (235 aa). Residues 9 to 12, K23, Q76, and 81 to 82 each bind UDP-N-acetyl-alpha-D-glucosamine; these read LAAG and GT. D109 serves as a coordination point for Mg(2+). The UDP-N-acetyl-alpha-D-glucosamine site is built by G146, E161, N176, and N233. Position 233 (N233) interacts with Mg(2+). The interval 236-256 is linker; that stretch reads VQLAALSKTYNRRVCERWMRN. Residues 257 to 460 are N-acetyltransferase; that stretch reads GVTILDPETT…VEGWKPAWER (204 aa). UDP-N-acetyl-alpha-D-glucosamine contacts are provided by R338 and K356. Residue H368 is the Proton acceptor of the active site. Residues Y371 and N382 each contribute to the UDP-N-acetyl-alpha-D-glucosamine site. Residues 391 to 392 and A428 each bind acetyl-CoA; that span reads NY.

The protein in the N-terminal section; belongs to the N-acetylglucosamine-1-phosphate uridyltransferase family. In the C-terminal section; belongs to the transferase hexapeptide repeat family. As to quaternary structure, homotrimer. Mg(2+) is required as a cofactor.

It localises to the cytoplasm. The catalysed reaction is alpha-D-glucosamine 1-phosphate + acetyl-CoA = N-acetyl-alpha-D-glucosamine 1-phosphate + CoA + H(+). It catalyses the reaction N-acetyl-alpha-D-glucosamine 1-phosphate + UTP + H(+) = UDP-N-acetyl-alpha-D-glucosamine + diphosphate. It participates in nucleotide-sugar biosynthesis; UDP-N-acetyl-alpha-D-glucosamine biosynthesis; N-acetyl-alpha-D-glucosamine 1-phosphate from alpha-D-glucosamine 6-phosphate (route II): step 2/2. Its pathway is nucleotide-sugar biosynthesis; UDP-N-acetyl-alpha-D-glucosamine biosynthesis; UDP-N-acetyl-alpha-D-glucosamine from N-acetyl-alpha-D-glucosamine 1-phosphate: step 1/1. The protein operates within bacterial outer membrane biogenesis; LPS lipid A biosynthesis. Its function is as follows. Catalyzes the last two sequential reactions in the de novo biosynthetic pathway for UDP-N-acetylglucosamine (UDP-GlcNAc). The C-terminal domain catalyzes the transfer of acetyl group from acetyl coenzyme A to glucosamine-1-phosphate (GlcN-1-P) to produce N-acetylglucosamine-1-phosphate (GlcNAc-1-P), which is converted into UDP-GlcNAc by the transfer of uridine 5-monophosphate (from uridine 5-triphosphate), a reaction catalyzed by the N-terminal domain. The chain is Bifunctional protein GlmU from Bifidobacterium longum subsp. infantis (strain ATCC 15697 / DSM 20088 / JCM 1222 / NCTC 11817 / S12).